The primary structure comprises 298 residues: Tyrosine recombinase XerC (298 aa).

The Core-binding (CB) domain maps to 2 to 88 (TDLHTDVERY…ALRSFFDWLV (87 aa)). Residues 109 to 288 (HLPKNIDVDD…DFQHLASVYD (180 aa)) form the Tyr recombinase domain. Active-site residues include Arg148, Lys172, His240, Arg243, and His266. The O-(3'-phospho-DNA)-tyrosine intermediate role is filled by Tyr275.

The protein belongs to the 'phage' integrase family. XerC subfamily. As to quaternary structure, forms a cyclic heterotetrameric complex composed of two molecules of XerC and two molecules of XerD, in which XerC interacts with XerD via its C-terminal region, XerD interacts with XerC via its C-terminal region and so on.

Its subcellular location is the cytoplasm. FtsK may regulate the catalytic switch between XerC and XerD in the heterotetrameric complex during the two steps of the recombination process. Functionally, site-specific tyrosine recombinase, which acts by catalyzing the cutting and rejoining of the recombining DNA molecules. Binds cooperatively to specific DNA consensus sequences that are separated from XerD binding sites by a short central region, forming the heterotetrameric XerC-XerD complex that recombines DNA substrates. The complex is essential to convert dimers of the bacterial chromosome into monomers to permit their segregation at cell division. It also contributes to the segregational stability of plasmids. In the complex XerC specifically exchanges the top DNA strands. The polypeptide is Tyrosine recombinase XerC (Escherichia coli O139:H28 (strain E24377A / ETEC)).